The following is a 387-amino-acid chain: MESPSLPMTAKDWTTTSLHRVFAMQGGEDDLSYVNNSDSQALAITLSKPILISSLQSIKLFSDQTPIKITDLGCATGSNTFTTVDTVVETLQRRYTARCGGGGSPEFEAFFCDLPSNDFNMLFKLLAEKQKVDSPAKYFAGGVAGSFYDRLFPRGTIHVAVSLSALHWLSQIPEKVLEKESRTWNKGKTWIEGAKKEVVEAYAEQSDKDLDDFMSCRKEEMVKGGVLFVLMAGRPSGSSSQFGDQDTRAKHPFTTTMEQAWQDLIEEGLIDEETRDGFNIPAYMRSPEEVTAGIDRCGGFKIGKMDFLKIVEYSDEKQEEWKKDPVSYGRARTNLVQAAIRPMVDAYLGPDLSHELFKRYENRVSTNQEFLHITCFYGVVVFSAIRV.

Y33 is an S-adenosyl-L-homocysteine binding site. Gibberellin A4 is bound at residue Q40. 6 residues coordinate S-adenosyl-L-homocysteine: C74, N79, D113, L114, S146, and F147. Gibberellin A4 is bound by residues H167 and W168. Mg(2+)-binding residues include N185, R275, D276, F278, and N279.

The protein belongs to the methyltransferase superfamily. Type-7 methyltransferase family. SABATH subfamily. The cofactor is Mg(2+). As to expression, expressed in siliques and germinating seeds. Not detected in leaves, stems, flowers and roots.

It catalyses the reaction gibberellin A4 + S-adenosyl-L-methionine = O-methyl gibberellin A4 + S-adenosyl-L-homocysteine. Down-regulated by Zn(2+), Cu(2+) and Fe(3+). No effect of K(+), NH(4+), Na(+), Ca(2+), Mg(2+), Mn(2+) and Fe(2+). Functionally, methylates the carboxyl group of several gibberellins (GAs). Substrate preference is GA4 &gt; GA34 &gt; GA9 &gt; GA3 &gt; GA1 &gt; GA51 &gt; GA20. No activity with diterpenes abietic acid and ent-kaurenoic acid. The sequence is that of Gibberellic acid methyltransferase 2 (GAMT2) from Arabidopsis thaliana (Mouse-ear cress).